Here is a 383-residue protein sequence, read N- to C-terminus: NifS-like protein (383 aa).

Pyridoxal 5'-phosphate is bound by residues 58-59 and 184-186; these read SE and SLN.

Belongs to the class-V pyridoxal-phosphate-dependent aminotransferase family. NifS/IscS subfamily. It depends on pyridoxal 5'-phosphate as a cofactor.

It is found in the virion. The chain is NifS-like protein from African swine fever virus (isolate Pig/Kenya/KEN-50/1950) (ASFV).